The primary structure comprises 198 residues: Carnitine operon protein CaiE (198 aa).

Positions 174–198 are disordered; the sequence is KPLTQAEENRPRLKGTTDVKPKSAQ. Over residues 180–198 the composition is skewed to basic and acidic residues; that stretch reads EENRPRLKGTTDVKPKSAQ.

The protein belongs to the transferase hexapeptide repeat family.

Its pathway is amine and polyamine metabolism; carnitine metabolism. In terms of biological role, overproduction of CaiE stimulates the activity of CaiB and CaiD. The sequence is that of Carnitine operon protein CaiE from Salmonella typhimurium (strain LT2 / SGSC1412 / ATCC 700720).